Here is a 419-residue protein sequence, read N- to C-terminus: Metacaspase-1A (419 aa).

The disordered stretch occupies residues 1–89 (MHHQQSSYGG…PPDQPVSFGQ (89 aa)). A compositionally biased stretch (polar residues) spans 41 to 51 (NGYNSPQQNYG). Residues 59–71 (YQQQSAYQNSYNQ) show a composition bias toward low complexity. Active-site residues include His-190 and Cys-246.

Belongs to the peptidase C14B family.

In terms of biological role, involved in cell death (apoptosis). The polypeptide is Metacaspase-1A (casA) (Aspergillus oryzae (strain ATCC 42149 / RIB 40) (Yellow koji mold)).